A 441-amino-acid polypeptide reads, in one-letter code: Ribosomal protein uS12 methylthiotransferase RimO (441 aa).

Residues 8-118 (PKIGFVSLGC…VLEHVHHYVP (111 aa)) enclose the MTTase N-terminal domain. [4Fe-4S] cluster-binding residues include C17, C53, C82, C150, C154, and C157. The Radical SAM core domain maps to 136–373 (LTPRHYAYLK…MQLQQQISAE (238 aa)). Residues 376-441 (QEKVGKEILV…DEYDLWGSRV (66 aa)) form the TRAM domain.

Belongs to the methylthiotransferase family. RimO subfamily. [4Fe-4S] cluster is required as a cofactor.

The protein localises to the cytoplasm. It catalyses the reaction L-aspartate(89)-[ribosomal protein uS12]-hydrogen + (sulfur carrier)-SH + AH2 + 2 S-adenosyl-L-methionine = 3-methylsulfanyl-L-aspartate(89)-[ribosomal protein uS12]-hydrogen + (sulfur carrier)-H + 5'-deoxyadenosine + L-methionine + A + S-adenosyl-L-homocysteine + 2 H(+). Functionally, catalyzes the methylthiolation of an aspartic acid residue of ribosomal protein uS12. In Escherichia fergusonii (strain ATCC 35469 / DSM 13698 / CCUG 18766 / IAM 14443 / JCM 21226 / LMG 7866 / NBRC 102419 / NCTC 12128 / CDC 0568-73), this protein is Ribosomal protein uS12 methylthiotransferase RimO.